The primary structure comprises 243 residues: Probable intron-encoded endonuclease aI3 (243 aa).

The protein belongs to the LAGLIDADG endonuclease family.

Its subcellular location is the mitochondrion. Mitochondrial DNA endonuclease involved in intron homing. The sequence is that of Probable intron-encoded endonuclease aI3 (aI3) from Dictyostelium citrinum (Slime mold).